The primary structure comprises 979 residues: Putative cellulose synthase-like protein D6 (979 aa).

The segment at 1-24 is disordered; it reads MMDGESPLRHPRISHVSNSGSDFG. The segment covering 14-24 has biased composition (low complexity); the sequence is SHVSNSGSDFG. The next 2 helical transmembrane spans lie at 116–136 and 147–167; these read IIIA…ALFL and ALWL…SWLL. Catalysis depends on residues D247 and D683. The next 6 helical transmembrane spans lie at 765–785, 788–808, 837–857, 882–902, 913–933, and 946–966; these read IFIL…HFVV, LTGS…GLAV, LVAV…SFTL, ALMI…LFAV, WSNL…MYPF, and TVVY…YITI.

The protein belongs to the glycosyltransferase 2 family. Plant cellulose synthase-like D subfamily.

The protein resides in the golgi apparatus membrane. In terms of biological role, thought to be a Golgi-localized beta-glycan synthase that polymerize the backbones of noncellulosic polysaccharides (hemicelluloses) of plant cell wall. The polypeptide is Putative cellulose synthase-like protein D6 (CSLD6) (Arabidopsis thaliana (Mouse-ear cress)).